The primary structure comprises 304 residues: Lipid droplet-associated triacylglycerol lipase (304 aa).

Residues 1–155 lie on the Lumenal side of the membrane; sequence MTVKEYTKSK…MGIKMTAALR (155 aa). N95 carries an N-linked (GlcNAc...) asparagine glycan. The short motif at 107–111 is the GXSXG element; it reads GHSVG. S109 acts as the Nucleophile in catalysis. The stretch at 156 to 176 is an intramembrane region; it reads YIPPLAHVVSLFSYIFFYWIL. Residues 177-304 are Lumenal-facing; it reads SEGFSRFIID…HAEYAINAFF (128 aa).

This sequence belongs to the AB hydrolase superfamily. LDAH family.

The protein resides in the lipid droplet. Its subcellular location is the membrane. It catalyses the reaction a triacylglycerol + H2O = a diacylglycerol + a fatty acid + H(+). Its function is as follows. Shows both triacylglycerol (TAG) lipase and ester hydrolase activities. May play a role in TAG homeostasis. The chain is Lipid droplet-associated triacylglycerol lipase from Saccharomyces cerevisiae (strain ATCC 204508 / S288c) (Baker's yeast).